A 291-amino-acid chain; its full sequence is Putative GATA transcription factor 13 (291 aa).

The segment at K187–P241 adopts a GATA-type zinc-finger fold. A disordered region spans residues T271–Q291.

The protein belongs to the type IV zinc-finger family. Class A subfamily.

It localises to the nucleus. In terms of biological role, transcriptional activator that specifically binds 5'-GATA-3' or 5'-GAT-3' motifs within gene promoters. May be involved in the regulation of some light-responsive genes. The polypeptide is Putative GATA transcription factor 13 (GATA13) (Arabidopsis thaliana (Mouse-ear cress)).